The following is a 511-amino-acid chain: Membrane-bound lytic murein transglycosylase F (511 aa).

Positions 1-19 (MKKLKINYLLIGIVTLLLA) are cleaved as a signal peptide. Residues 20–269 (AALWPSIPWS…RLEEKYLGHG (250 aa)) form a non-LT domain region. Residues 270 to 511 (NDFDYVDTRT…ARMKLPGHLY (242 aa)) are LT domain. The active site involves Glu314.

The protein in the N-terminal section; belongs to the bacterial solute-binding protein 3 family. It in the C-terminal section; belongs to the transglycosylase Slt family.

Its subcellular location is the cell outer membrane. The enzyme catalyses Exolytic cleavage of the (1-&gt;4)-beta-glycosidic linkage between N-acetylmuramic acid (MurNAc) and N-acetylglucosamine (GlcNAc) residues in peptidoglycan, from either the reducing or the non-reducing ends of the peptidoglycan chains, with concomitant formation of a 1,6-anhydrobond in the MurNAc residue.. Functionally, murein-degrading enzyme that degrades murein glycan strands and insoluble, high-molecular weight murein sacculi, with the concomitant formation of a 1,6-anhydromuramoyl product. Lytic transglycosylases (LTs) play an integral role in the metabolism of the peptidoglycan (PG) sacculus. Their lytic action creates space within the PG sacculus to allow for its expansion as well as for the insertion of various structures such as secretion systems and flagella. This chain is Membrane-bound lytic murein transglycosylase F, found in Klebsiella pneumoniae subsp. pneumoniae (strain ATCC 700721 / MGH 78578).